A 209-amino-acid chain; its full sequence is DNA ADP-ribosyl transferase (209 aa).

One can recognise a DarT domain in the interval 9-209 (TPIYHITHID…RVCIRKDWYY (201 aa)). NAD(+)-binding positions include 13–15 (HIT), G22, and L30. The NAD(+)-binding element stretch occupies residues 35–53 (SPPKQRSIAYAHIQERRNR). Residues 44–50 (YAHIQER) mediate DNA binding. Residue R51 coordinates NAD(+). R51 acts as the Proton acceptor in catalysis. 3 consecutive DNA-binding regions follow at residues 75 to 80 (RSPMLY), 145 to 148 (SYWA), and 154 to 158 (REKKQ). The interval 116–160 (TDRHGVLSHARFFRQLEELAQLDWEAIQASYWADPPELREKKQAE) is ADP-ribosylating turn-turn loop. Residue E160 is part of the active site.

Belongs to the DarT ADP-ribosyltransferase family. Interacts with cognate antitoxin DarG (via C-terminus); this heterodimeric complex neutralizes the toxic effect of DarT by preventing ssDNA binding to DarT and consequently inactivating the toxin by direct protein-protein interactions.

It catalyses the reaction a thymidine in DNA + NAD(+) = an N-(ADP-alpha-D-ribosyl)-thymidine in DNA + nicotinamide + H(+). Functionally, toxic component of the hybrid type II/IV toxin-antitoxin (TA) system DarTG, which plays a crucial role in controlling bacterial growth and bacteriophage infection. In case of phage infection, DarT toxin ADP-ribosylates DNA, which inhibits both viral DNA and RNA synthesis and leads to abortive infection. ADP-ribosylates ssDNA on the second thymidine of the consensus sequence 5'-TNTC-3'; the protein does not auto-modify. Arg-51 is highly flexible, allowing it to assume multiple positions in the crystal structures. Its toxic effect is neutralized by cognate antitoxin DarG. The sequence is that of DNA ADP-ribosyl transferase from Thermus sp. (strain 2.9).